A 530-amino-acid chain; its full sequence is Phosphoenolpyruvate carboxykinase (ATP) (530 aa).

3 residues coordinate substrate: Arg-60, Tyr-195, and Lys-201. ATP-binding positions include Lys-201, His-221, and 237–245; that span reads GLSGTGKTT. Positions 201 and 221 each coordinate Mn(2+). Asp-258 contacts Mn(2+). ATP contacts are provided by Glu-286, Arg-324, and Ser-449. Position 324 (Arg-324) interacts with substrate.

The protein belongs to the phosphoenolpyruvate carboxykinase (ATP) family. It depends on Mn(2+) as a cofactor.

The protein localises to the cytoplasm. It catalyses the reaction oxaloacetate + ATP = phosphoenolpyruvate + ADP + CO2. It participates in carbohydrate biosynthesis; gluconeogenesis. In terms of biological role, involved in the gluconeogenesis. Catalyzes the conversion of oxaloacetate (OAA) to phosphoenolpyruvate (PEP) through direct phosphoryl transfer between the nucleoside triphosphate and OAA. The polypeptide is Phosphoenolpyruvate carboxykinase (ATP) (Geotalea uraniireducens (strain Rf4) (Geobacter uraniireducens)).